The chain runs to 675 residues: Methionine--tRNA ligase (675 aa).

The short motif at 15-25 (PYANGSIHLGH) is the 'HIGH' region element. Zn(2+) contacts are provided by C146, C149, C159, and C162. Positions 332–336 (KMSKS) match the 'KMSKS' region motif. K335 contacts ATP. The tRNA-binding domain occupies 574–675 (DFAKLDLRIA…AGAKPGMRVK (102 aa)).

This sequence belongs to the class-I aminoacyl-tRNA synthetase family. MetG type 1 subfamily. In terms of assembly, homodimer. It depends on Zn(2+) as a cofactor.

It is found in the cytoplasm. The catalysed reaction is tRNA(Met) + L-methionine + ATP = L-methionyl-tRNA(Met) + AMP + diphosphate. Its function is as follows. Is required not only for elongation of protein synthesis but also for the initiation of all mRNA translation through initiator tRNA(fMet) aminoacylation. This chain is Methionine--tRNA ligase, found in Tolumonas auensis (strain DSM 9187 / NBRC 110442 / TA 4).